The following is a 496-amino-acid chain: N-succinylglutamate 5-semialdehyde dehydrogenase (496 aa).

229–234 (GSYATG) is a binding site for NAD(+). Active-site residues include E252 and C286.

Belongs to the aldehyde dehydrogenase family. AstD subfamily.

It catalyses the reaction N-succinyl-L-glutamate 5-semialdehyde + NAD(+) + H2O = N-succinyl-L-glutamate + NADH + 2 H(+). It functions in the pathway amino-acid degradation; L-arginine degradation via AST pathway; L-glutamate and succinate from L-arginine: step 4/5. In terms of biological role, catalyzes the NAD-dependent reduction of succinylglutamate semialdehyde into succinylglutamate. The chain is N-succinylglutamate 5-semialdehyde dehydrogenase from Legionella pneumophila subsp. pneumophila (strain Philadelphia 1 / ATCC 33152 / DSM 7513).